The chain runs to 211 residues: ATP phosphoribosyltransferase (211 aa).

It belongs to the ATP phosphoribosyltransferase family. Short subfamily. Heteromultimer composed of HisG and HisZ subunits.

It is found in the cytoplasm. The catalysed reaction is 1-(5-phospho-beta-D-ribosyl)-ATP + diphosphate = 5-phospho-alpha-D-ribose 1-diphosphate + ATP. The protein operates within amino-acid biosynthesis; L-histidine biosynthesis; L-histidine from 5-phospho-alpha-D-ribose 1-diphosphate: step 1/9. Catalyzes the condensation of ATP and 5-phosphoribose 1-diphosphate to form N'-(5'-phosphoribosyl)-ATP (PR-ATP). Has a crucial role in the pathway because the rate of histidine biosynthesis seems to be controlled primarily by regulation of HisG enzymatic activity. In Pseudomonas putida (strain GB-1), this protein is ATP phosphoribosyltransferase.